Reading from the N-terminus, the 143-residue chain is 3-hydroxyacyl-[acyl-carrier-protein] dehydratase FabZ (143 aa).

The active site involves His49.

This sequence belongs to the thioester dehydratase family. FabZ subfamily.

It localises to the cytoplasm. It carries out the reaction a (3R)-hydroxyacyl-[ACP] = a (2E)-enoyl-[ACP] + H2O. Involved in unsaturated fatty acids biosynthesis. Catalyzes the dehydration of short chain beta-hydroxyacyl-ACPs and long chain saturated and unsaturated beta-hydroxyacyl-ACPs. The polypeptide is 3-hydroxyacyl-[acyl-carrier-protein] dehydratase FabZ (Ehrlichia chaffeensis (strain ATCC CRL-10679 / Arkansas)).